The chain runs to 315 residues: Ribosomal RNA small subunit methyltransferase H (315 aa).

Residues 35-37, Asp55, Phe80, Asp102, and Gln109 each bind S-adenosyl-L-methionine; that span reads GGH.

This sequence belongs to the methyltransferase superfamily. RsmH family.

It localises to the cytoplasm. The enzyme catalyses cytidine(1402) in 16S rRNA + S-adenosyl-L-methionine = N(4)-methylcytidine(1402) in 16S rRNA + S-adenosyl-L-homocysteine + H(+). In terms of biological role, specifically methylates the N4 position of cytidine in position 1402 (C1402) of 16S rRNA. The protein is Ribosomal RNA small subunit methyltransferase H of Shewanella pealeana (strain ATCC 700345 / ANG-SQ1).